A 226-amino-acid polypeptide reads, in one-letter code: MSRVRLVIAQCTVDYIGRLTAHLPSARRLLLFKADGSVSVHADDRAYKPLNWMSPPCWLTEESGGQAPVWVVENKAGEQLRITIEGIEHDSSHELGVDPGLVKDGVEAHLQALLAEHIQLLGEGYTLVRREYMTAIGPVDLLCRDERGGSVAVEIKRRGEIDGVEQLTRYLELLNRDSVLAPVKGVFAAQQIKPQARILATDRGIRCLTLDYDTMRGMDSGEYRLF.

Belongs to the NucS endonuclease family.

The protein resides in the cytoplasm. Its function is as follows. Cleaves both 3' and 5' ssDNA extremities of branched DNA structures. This chain is Endonuclease NucS, found in Mycobacterium tuberculosis (strain CDC 1551 / Oshkosh).